A 447-amino-acid polypeptide reads, in one-letter code: N-succinylarginine dihydrolase (447 aa).

Substrate-binding positions include 19 to 28, N110, and 137 to 138; these read AGLSFGNEAS and HR. The active site involves E174. R214 provides a ligand contact to substrate. Residue H250 is part of the active site. 2 residues coordinate substrate: D252 and N365. Catalysis depends on C371, which acts as the Nucleophile.

This sequence belongs to the succinylarginine dihydrolase family. Homodimer.

The enzyme catalyses N(2)-succinyl-L-arginine + 2 H2O + 2 H(+) = N(2)-succinyl-L-ornithine + 2 NH4(+) + CO2. The protein operates within amino-acid degradation; L-arginine degradation via AST pathway; L-glutamate and succinate from L-arginine: step 2/5. Its function is as follows. Catalyzes the hydrolysis of N(2)-succinylarginine into N(2)-succinylornithine, ammonia and CO(2). This is N-succinylarginine dihydrolase from Acinetobacter baumannii (strain SDF).